Here is a 305-residue protein sequence, read N- to C-terminus: UDP-3-O-acyl-N-acetylglucosamine deacetylase (305 aa).

Residues histidine 79, histidine 238, and aspartate 242 each contribute to the Zn(2+) site. The Proton donor role is filled by histidine 265.

The protein belongs to the LpxC family. The cofactor is Zn(2+).

The enzyme catalyses a UDP-3-O-[(3R)-3-hydroxyacyl]-N-acetyl-alpha-D-glucosamine + H2O = a UDP-3-O-[(3R)-3-hydroxyacyl]-alpha-D-glucosamine + acetate. The protein operates within glycolipid biosynthesis; lipid IV(A) biosynthesis; lipid IV(A) from (3R)-3-hydroxytetradecanoyl-[acyl-carrier-protein] and UDP-N-acetyl-alpha-D-glucosamine: step 2/6. Functionally, catalyzes the hydrolysis of UDP-3-O-myristoyl-N-acetylglucosamine to form UDP-3-O-myristoylglucosamine and acetate, the committed step in lipid A biosynthesis. This chain is UDP-3-O-acyl-N-acetylglucosamine deacetylase, found in Actinobacillus succinogenes (strain ATCC 55618 / DSM 22257 / CCUG 43843 / 130Z).